Reading from the N-terminus, the 345-residue chain is Phenylalanine--tRNA ligase alpha subunit (345 aa).

Residue Glu-262 coordinates Mg(2+).

Belongs to the class-II aminoacyl-tRNA synthetase family. Phe-tRNA synthetase alpha subunit type 1 subfamily. Tetramer of two alpha and two beta subunits. Mg(2+) serves as cofactor.

It is found in the cytoplasm. The catalysed reaction is tRNA(Phe) + L-phenylalanine + ATP = L-phenylalanyl-tRNA(Phe) + AMP + diphosphate + H(+). The protein is Phenylalanine--tRNA ligase alpha subunit of Ehrlichia canis (strain Jake).